Here is a 408-residue protein sequence, read N- to C-terminus: tRNA(Ile)-lysidine synthase (408 aa).

Serine 27–serine 32 provides a ligand contact to ATP.

It belongs to the tRNA(Ile)-lysidine synthase family.

It localises to the cytoplasm. It carries out the reaction cytidine(34) in tRNA(Ile2) + L-lysine + ATP = lysidine(34) in tRNA(Ile2) + AMP + diphosphate + H(+). Its function is as follows. Ligates lysine onto the cytidine present at position 34 of the AUA codon-specific tRNA(Ile) that contains the anticodon CAU, in an ATP-dependent manner. Cytidine is converted to lysidine, thus changing the amino acid specificity of the tRNA from methionine to isoleucine. In Caulobacter vibrioides (strain ATCC 19089 / CIP 103742 / CB 15) (Caulobacter crescentus), this protein is tRNA(Ile)-lysidine synthase.